Reading from the N-terminus, the 932-residue chain is MSEEEKELKNRKKVIIGLGIFIFIFLFGFLSEILSFITDYQWFQELGYESVFLTKLKTQLQIGIPLFIVGTILYYLYLIGLKKEYYKQIKSYHMDISEKRVNQILILPAFVFGLMTSTSVAGSLWFDILLYANAKPFNLTDPLFNNDITYYLLELPFLKQLLNTVTSILFLMVIITVIFYVIMFLIRRPTLYEVKADLQWNSNFFVSLLQIALKQFAALGVIFFLVLAARYYLGVYDLLYSTRGVVYGASYTDTHVTLWVYRAQILASLLSATGVVYAYVKRNPKLLLIAPISIIAVGILGNVISLGVQNFIVSPNEIARELPYIEHNLSYTRRAYGIGEIQETDFPYDTELTREDIENNQEIIDNIRINDYRPALEVYNQIQAFRPYYRFVDVDIDRYWVNGEYRQVFIAPRELDQRELSDNAQTWINQTLKYTHGYGVALSPVNEVTSGGQPVLWMRNFPLVSSVDIEVTRPEIYFGELTDQYIIVNTKEKEFDYPLDNDNAETLYEGTAGVPLKGVNRLLYSWRQGTLKMLLSGNITSESRIVFDRNIVTRMNKIAPFITYDEDPYIVINEGKLYWMIDGYTISGNFPYAEPYMAGNNNYIRNSVKVVIDAYNGTVDYYISDEEDPIILTYQAIFPDLFKPLDDMPEGLKAHIRYPQVLFDIQSEVYATYHMNNPRVFYNKEDLWRIAREKYDQNEQTIESQYMMMKLPGEESEEFVISVPYTPIRLDNMRALLVARNDGEQYGELIAYRMPKDQNVYGPKQIEDRIDQNTTISQNLSLWGEGGSSVIRGNLLVVPIENSLLYVEPLYIRATSGTSLPEVKMVIVSFGDQIVMEPTLEEALNRIFGARVEEIREEIQEEVEGDTDGETITEEITEGLGEASQLIRRASEVFDRAQEASRQGNWSAYGDALEELEQVLRQLQETTQVLEN.

The next 7 membrane-spanning stretches (helical) occupy residues 14-34 (VIIG…SEIL), 60-80 (LQIG…YLIG), 104-124 (ILIL…AGSL), 166-186 (TSIL…MFLI), 208-228 (LLQI…LVLA), 256-276 (VTLW…TGVV), and 286-306 (LLLI…VISL).

The protein belongs to the UPF0182 family.

The protein resides in the cell membrane. This Alkaliphilus metalliredigens (strain QYMF) protein is UPF0182 protein Amet_0022.